The primary structure comprises 213 residues: N-(5'-phosphoribosyl)anthranilate isomerase (213 aa).

It belongs to the TrpF family.

The enzyme catalyses N-(5-phospho-beta-D-ribosyl)anthranilate = 1-(2-carboxyphenylamino)-1-deoxy-D-ribulose 5-phosphate. The protein operates within amino-acid biosynthesis; L-tryptophan biosynthesis; L-tryptophan from chorismate: step 3/5. This is N-(5'-phosphoribosyl)anthranilate isomerase from Methylibium petroleiphilum (strain ATCC BAA-1232 / LMG 22953 / PM1).